We begin with the raw amino-acid sequence, 390 residues long: Isotocin receptor (390 aa).

The Extracellular segment spans residues 1 to 48 (MEEMFKEQDFWSFNESSRNSTVGNETFGGNQTVNPLKRNEEVAKVEVT). N-linked (GlcNAc...) asparagine glycans are attached at residues Asn14, Asn19, Asn24, and Asn30. The helical transmembrane segment at 49 to 69 (VLALVLFLALAGNLCVLIAIY) threads the bilayer. Residues 70-86 (TAKHTQSRMYYLMKHLS) lie on the Cytoplasmic side of the membrane. The helical transmembrane segment at 87–107 (IADLVVAVFQVLPQLIWDITF) threads the bilayer. The Extracellular segment spans residues 108-124 (RFYGPDFLCRLVKYLQT). A disulfide bridge connects residues Cys116 and Cys191. The chain crosses the membrane as a helical span at residues 125–145 (VGMFASTYMLVLMSIDRCIAI). The Cytoplasmic segment spans residues 146 to 160 (CQPLRSLHKRKDRCY). The chain crosses the membrane as a helical span at residues 161-181 (VIVSWALSLVFSVPQVYIFSL). The Extracellular portion of the chain corresponds to 182–206 (REIGNGVYDCWGDFVQPWGAKAYIT). Residues 207–227 (WISLTIYIIPVAILGGCYGLI) form a helical membrane-spanning segment. The Cytoplasmic segment spans residues 228–276 (SFKIWQNFKRKTKKDQCITLTTAASKANALARVSSVKLVSKAKITTVKM). A helical membrane pass occupies residues 277 to 297 (TFVIVLAYIVCWTPFFFVQMW). Residues 298 to 311 (SAWDPEAPREAMPF) lie on the Extracellular side of the membrane. A helical membrane pass occupies residues 312-332 (IISMLLASLNSCCNPWIYMFF). The Cytoplasmic portion of the chain corresponds to 333–390 (AGHLFHDLKQSLLCCSTLYLKSSQCRCDQEHDSRKSNCSTYVIKSTSSQRSITQSSIT).

It belongs to the G-protein coupled receptor 1 family. Vasopressin/oxytocin receptor subfamily. Expressed in brain, intestine, bladder, skeletal muscle, lateral line, gills and kidney.

It is found in the cell membrane. Functionally, binds to isotocin. Can also be activated by vasotocin, mesotocin, oxytocin and Arg-vasopressin, although these have lower potencies than isotocin. Produces an induction of membrane chloride currents indicating that it is coupled to the inositol phosphate/calcium pathway. This chain is Isotocin receptor, found in Catostomus commersonii (White sucker).